The chain runs to 831 residues: Probable glucan 1,3-beta-glucosidase D (831 aa).

6 stretches are compositionally biased toward basic and acidic residues: residues 1 to 24 (MPSH…YREV), 44 to 56 (RRDD…RSHE), 79 to 93 (RSHD…RSRA), 102 to 115 (SRRD…EYRR), 137 to 151 (RDGQ…DREA), and 198 to 213 (QRER…MESK). Disordered stretches follow at residues 1-179 (MPSH…SGSH) and 192-241 (HYDE…GQSK). The Cytoplasmic portion of the chain corresponds to 1 to 297 (MPSHSRSRDR…AQPPFWKRKK (297 aa)). A helical; Signal-anchor for type II membrane protein transmembrane segment spans residues 298–318 (WWIVIGVLVVVLAIVIPVAVV). The Extracellular segment spans residues 319-831 (MSKKHGHDDD…PSFGDLPEYY (513 aa)). 7 N-linked (GlcNAc...) asparagine glycosylation sites follow: asparagine 376, asparagine 381, asparagine 393, asparagine 410, asparagine 442, asparagine 546, and asparagine 558. The active-site Proton donor is the glutamate 597. Residues asparagine 610, asparagine 636, asparagine 669, and asparagine 689 are each glycosylated (N-linked (GlcNAc...) asparagine). Glutamate 702 (nucleophile) is an active-site residue.

Belongs to the glycosyl hydrolase 5 (cellulase A) family.

Its subcellular location is the cell membrane. It carries out the reaction Successive hydrolysis of beta-D-glucose units from the non-reducing ends of (1-&gt;3)-beta-D-glucans, releasing alpha-glucose.. In terms of biological role, glucosidase involved in the degradation of cellulosic biomass. Active on lichenan. The polypeptide is Probable glucan 1,3-beta-glucosidase D (exgD) (Aspergillus oryzae (strain ATCC 42149 / RIB 40) (Yellow koji mold)).